Consider the following 205-residue polypeptide: ATP-dependent Clp protease proteolytic subunit (205 aa).

Residue S98 is the Nucleophile of the active site. The active site involves H123.

The protein belongs to the peptidase S14 family. In terms of assembly, fourteen ClpP subunits assemble into 2 heptameric rings which stack back to back to give a disk-like structure with a central cavity, resembling the structure of eukaryotic proteasomes.

The protein localises to the cytoplasm. The catalysed reaction is Hydrolysis of proteins to small peptides in the presence of ATP and magnesium. alpha-casein is the usual test substrate. In the absence of ATP, only oligopeptides shorter than five residues are hydrolyzed (such as succinyl-Leu-Tyr-|-NHMec, and Leu-Tyr-Leu-|-Tyr-Trp, in which cleavage of the -Tyr-|-Leu- and -Tyr-|-Trp bonds also occurs).. In terms of biological role, cleaves peptides in various proteins in a process that requires ATP hydrolysis. Has a chymotrypsin-like activity. Plays a major role in the degradation of misfolded proteins. The polypeptide is ATP-dependent Clp protease proteolytic subunit (Desulforapulum autotrophicum (strain ATCC 43914 / DSM 3382 / VKM B-1955 / HRM2) (Desulfobacterium autotrophicum)).